Consider the following 153-residue polypeptide: Two-component response regulator ARR17 (153 aa).

Residues 21–149 (HVLAVDDNLI…DVEKLKCHLL (129 aa)) enclose the Response regulatory domain. Asp-82 carries the post-translational modification 4-aspartylphosphate.

Belongs to the ARR family. Type-A subfamily. Post-translationally, two-component system major event consists of a His-to-Asp phosphorelay between a sensor histidine kinase (HK) and a response regulator (RR). In plants, the His-to-Asp phosphorelay involves an additional intermediate named Histidine-containing phosphotransfer protein (HPt). This multistep phosphorelay consists of a His-Asp-His-Asp sequential transfer of a phosphate group between first a His and an Asp of the HK protein, followed by the transfer to a conserved His of the HPt protein and finally the transfer to an Asp in the receiver domain of the RR protein.

Its subcellular location is the nucleus. Functionally, functions as a response regulator involved in His-to-Asp phosphorelay signal transduction system. Phosphorylation of the Asp residue in the receiver domain activates the ability of the protein to promote the transcription of target genes. Type-A response regulators seem to act as negative regulators of the cytokinin signaling. The chain is Two-component response regulator ARR17 (ARR17) from Arabidopsis thaliana (Mouse-ear cress).